Consider the following 213-residue polypeptide: EEF1A lysine methyltransferase 1 (213 aa).

Belongs to the class I-like SAM-binding methyltransferase superfamily. EFM5 family.

It is found in the cytoplasm. It catalyses the reaction L-lysyl-[protein] + 3 S-adenosyl-L-methionine = N(6),N(6),N(6)-trimethyl-L-lysyl-[protein] + 3 S-adenosyl-L-homocysteine + 3 H(+). Protein-lysine methyltransferase that selectively catalyzes the trimethylation of EEF1A at 'Lys-79'. This chain is EEF1A lysine methyltransferase 1, found in Gallus gallus (Chicken).